Here is a 120-residue protein sequence, read N- to C-terminus: MFALPGYDAFLGFLLIAAAVPALALITNKFLAPKSRAGERQLTYESGMEPIGGAWIQFNIRYYMFALVFVIFDVETVFLYPWAVAFHRLGVLAFIEALIFITILLVALAYAWRKGALEWS.

The next 3 helical transmembrane spans lie at 6-26 (GYDA…LALI), 64-84 (MFAL…PWAV), and 89-109 (LGVL…VALA).

Belongs to the complex I subunit 3 family. In terms of assembly, NDH-1 can be composed of about 15 different subunits; different subcomplexes with different compositions have been identified which probably have different functions.

It is found in the cellular thylakoid membrane. The enzyme catalyses a plastoquinone + NADH + (n+1) H(+)(in) = a plastoquinol + NAD(+) + n H(+)(out). It carries out the reaction a plastoquinone + NADPH + (n+1) H(+)(in) = a plastoquinol + NADP(+) + n H(+)(out). Functionally, NDH-1 shuttles electrons from an unknown electron donor, via FMN and iron-sulfur (Fe-S) centers, to quinones in the respiratory and/or the photosynthetic chain. The immediate electron acceptor for the enzyme in this species is believed to be plastoquinone. Couples the redox reaction to proton translocation, and thus conserves the redox energy in a proton gradient. Cyanobacterial NDH-1 also plays a role in inorganic carbon-concentration. This chain is NAD(P)H-quinone oxidoreductase subunit 3, found in Parasynechococcus marenigrum (strain WH8102).